The chain runs to 108 residues: Cuticle protein AM1199 (108 aa).

Residue glutamine 1 is modified to Pyrrolidone carboxylic acid. In terms of domain architecture, Chitin-binding type R&amp;R spans 26–91 (DGNFGYDFET…AESPLIPTPH (66 aa)). O-linked (HexNAc) threonine glycosylation occurs at threonine 89.

Arthrodial membrane.

The sequence is that of Cuticle protein AM1199 from Cancer pagurus (Rock crab).